The chain runs to 932 residues: 2-oxoglutarate dehydrogenase E1 component (932 aa).

The protein belongs to the alpha-ketoglutarate dehydrogenase family. Homodimer. Part of the 2-oxoglutarate dehydrogenase (OGDH) complex composed of E1 (2-oxoglutarate dehydrogenase), E2 (dihydrolipoamide succinyltransferase) and E3 (dihydrolipoamide dehydrogenase); the complex contains multiple copies of the three enzymatic components (E1, E2 and E3). Thiamine diphosphate serves as cofactor.

The catalysed reaction is N(6)-[(R)-lipoyl]-L-lysyl-[protein] + 2-oxoglutarate + H(+) = N(6)-[(R)-S(8)-succinyldihydrolipoyl]-L-lysyl-[protein] + CO2. Functionally, E1 component of the 2-oxoglutarate dehydrogenase (OGDH) complex which catalyzes the decarboxylation of 2-oxoglutarate, the first step in the conversion of 2-oxoglutarate to succinyl-CoA and CO(2). The protein is 2-oxoglutarate dehydrogenase E1 component of Staphylococcus aureus (strain USA300).